A 339-amino-acid chain; its full sequence is MANLDKYTETFKMGSNSTSTAEIYCNVTNVKFQYSLYATTYILIFIPGLLANSAALWVLCRFISKKNKAIIFMINLSVADLAHVLSLPLRIYYYISHHWPFQRALCLLCFYLKYLNMYASICFLTCISLQRCFFLLKPFRARDWKRRYDVGISAAIWIVVGTACLPFPILRSTDLNNNKSCFADLGYKQMNAVALVGMITVAELAGFVIPVIIIAWCTWKTTISLRQPPMAFQGISERQKALRMVFMCAAVFFICFTPYHINFIFYTMVKETIISSCPVVRIALYFHPFCLCLASLCCLLDPILYYFMASEFRDQLSRHGSSVTRSRLMSKESGSSMIG.

The Extracellular portion of the chain corresponds to 1–39 (MANLDKYTETFKMGSNSTSTAEIYCNVTNVKFQYSLYAT). N16 and N26 each carry an N-linked (GlcNAc...) asparagine glycan. Residues 40-60 (TYILIFIPGLLANSAALWVLC) form a helical membrane-spanning segment. Residues 61 to 68 (RFISKKNK) are Cytoplasmic-facing. Residues 69 to 89 (AIIFMINLSVADLAHVLSLPL) form a helical membrane-spanning segment. The Extracellular segment spans residues 90–103 (RIYYYISHHWPFQR). A helical membrane pass occupies residues 104–124 (ALCLLCFYLKYLNMYASICFL). C106 and C181 are disulfide-bonded. Residues 125-149 (TCISLQRCFFLLKPFRARDWKRRYD) lie on the Cytoplasmic side of the membrane. Residues 150 to 170 (VGISAAIWIVVGTACLPFPIL) traverse the membrane as a helical segment. Over 171-193 (RSTDLNNNKSCFADLGYKQMNAV) the chain is Extracellular. N-linked (GlcNAc...) asparagine glycosylation occurs at N178. The helical transmembrane segment at 194-214 (ALVGMITVAELAGFVIPVIII) threads the bilayer. Residues 215–244 (AWCTWKTTISLRQPPMAFQGISERQKALRM) are Cytoplasmic-facing. A helical transmembrane segment spans residues 245 to 265 (VFMCAAVFFICFTPYHINFIF). Over 266-288 (YTMVKETIISSCPVVRIALYFHP) the chain is Extracellular. A helical transmembrane segment spans residues 289 to 309 (FCLCLASLCCLLDPILYYFMA). Over 310–339 (SEFRDQLSRHGSSVTRSRLMSKESGSSMIG) the chain is Cytoplasmic.

This sequence belongs to the G-protein coupled receptor 1 family. In terms of tissue distribution, weakly expressed in blood leukocytes.

The protein resides in the cell membrane. Putative receptor for purines coupled to G-proteins. This chain is Putative P2Y purinoceptor 10 (P2RY10), found in Homo sapiens (Human).